A 206-amino-acid chain; its full sequence is Large ribosomal subunit protein eL13y (206 aa).

The tract at residues 182–206 is disordered; sequence LERTNKRHAGARAKRAADAEKEEKK. The span at 186-195 shows a compositional bias: basic residues; it reads NKRHAGARAK. Over residues 196 to 206 the composition is skewed to basic and acidic residues; sequence RAADAEKEEKK.

This sequence belongs to the eukaryotic ribosomal protein eL13 family.

This chain is Large ribosomal subunit protein eL13y, found in Brassica napus (Rape).